A 1610-amino-acid chain; its full sequence is Adenylate cyclase type 10 (1610 aa).

Guanylate cyclase domains are found at residues 42–179 (VLMF…RLAQ) and 293–418 (TIVF…ARMM). Mg(2+)-binding residues include D47 and I48. 47 to 52 (DISGFT) is an ATP binding site. Residue K95 participates in hydrogencarbonate binding. Position 99 (D99) interacts with Mg(2+). The ATP site is built by D99 and K144. Hydrogencarbonate contacts are provided by V167, R176, and M337. ATP-binding positions include V406 and 412-416 (NIAAR).

Belongs to the adenylyl cyclase class-4/guanylyl cyclase family. The cofactor is Mg(2+). Mn(2+) serves as cofactor.

The protein resides in the cell membrane. The protein localises to the cytoplasm. Its subcellular location is the cytoskeleton. It localises to the perinuclear region. It is found in the nucleus. The protein resides in the cell projection. The protein localises to the cilium. It catalyses the reaction ATP = 3',5'-cyclic AMP + diphosphate. Its activity is regulated as follows. Activated by manganese or magnesium ions. In the presence of magnesium ions, the enzyme is activated by bicarbonate. Calcium mildly increases the enzyme activity, also in the presence of magnesium ions. Functionally, catalyzes the formation of the signaling molecule cAMP. May function as sensor that mediates responses to changes in cellular bicarbonate and CO(2) levels. Has a critical role in mammalian spermatogenesis by producing the cAMP which regulates cAMP-responsive nuclear factors indispensable for sperm maturation in the epididymis. Induces capacitation, the maturational process that sperm undergo prior to fertilization. Involved in ciliary beat regulation. The polypeptide is Adenylate cyclase type 10 (ADCY10) (Oryctolagus cuniculus (Rabbit)).